The chain runs to 469 residues: D-3-phosphoglycerate dehydrogenase 2 (469 aa).

Serine 2 bears the N-acetylserine mark. Residues serine 22, serine 29, and serine 33 each carry the phosphoserine modification. NAD(+) contacts are provided by residues 208–209 (HI), aspartate 228, 285–287 (ASR), and aspartate 311. The active site involves arginine 287. Residue glutamate 316 is part of the active site. The active-site Proton donor is histidine 347. Position 347–350 (347–350 (HIGG)) interacts with NAD(+). Positions 399–469 (RVLYIHRNVP…SAKVSIRLLY (71 aa)) constitute an ACT domain.

Belongs to the D-isomer specific 2-hydroxyacid dehydrogenase family.

The catalysed reaction is (2R)-3-phosphoglycerate + NAD(+) = 3-phosphooxypyruvate + NADH + H(+). The enzyme catalyses (R)-2-hydroxyglutarate + NAD(+) = 2-oxoglutarate + NADH + H(+). The protein operates within amino-acid biosynthesis; L-serine biosynthesis; L-serine from 3-phospho-D-glycerate: step 1/3. In terms of biological role, catalyzes the reversible oxidation of 3-phospho-D-glycerate to 3-phosphonooxypyruvate, the first step of the phosphorylated L-serine biosynthesis pathway. Also catalyzes the reversible oxidation of 2-hydroxyglutarate to 2-oxoglutarate. This Saccharomyces cerevisiae (strain ATCC 204508 / S288c) (Baker's yeast) protein is D-3-phosphoglycerate dehydrogenase 2 (SER33).